A 904-amino-acid polypeptide reads, in one-letter code: Essential for maintenance of the cell wall protein 1 (904 aa).

TPR repeat units follow at residues Trp510–Leu544, Ile563–Val596, Ala603–Ser636, Phe637–His670, Ala671–Lys704, and Trp706–Lys739.

This sequence belongs to the TTC27 family.

The protein resides in the cytoplasm. It localises to the nucleus. Its function is as follows. Required for the maintenance of the cell wall integrity. The sequence is that of Essential for maintenance of the cell wall protein 1 (EMW1) from Saccharomyces cerevisiae (strain ATCC 204508 / S288c) (Baker's yeast).